We begin with the raw amino-acid sequence, 541 residues long: Acyl-CoA ligase M9 (541 aa).

186–197 contacts AMP; the sequence is AMSTSGTTGLPK. An AMP-binding region spans residues 445 to 519; the sequence is ELEAVLHQMP…DSLPRNSSGK (75 aa).

Belongs to the ATP-dependent AMP-binding enzyme family.

Its pathway is secondary metabolite biosynthesis. In terms of biological role, acyl-CoA ligase; part of the gene cluster that mediates the biosynthesis of squalestatin S1 (SQS1, also known as zaragozic acid A), a heavily oxidized fungal polyketide that offers potent cholesterol lowering activity by targeting squalene synthase (SS). SQS1 is composed of a 2,8-dioxobicyclic[3.2.1]octane-3,4,5-tricarboxyclic acid core that is connected to two lipophilic polyketide arms. These initial steps feature the priming of an unusual benzoic acid starter unit onto the highly reducing polyketide synthase pks2, followed by oxaloacetate extension and product release to generate a tricarboxylic acid containing product. The phenylalanine ammonia lyase (PAL) M7 and the acyl-CoA ligase M9 are involved in transforming phenylalanine into benzoyl-CoA. The citrate synthase-like protein R3 is involved in connecting the C-alpha-carbons of the hexaketide chain and oxaloacetate to afford the tricarboxylic acid unit. The potential hydrolytic enzymes, M8 and M10, are in close proximity to pks2 and may participate in product release. On the other side, the tetraketide arm is synthesized by a the squalestatin tetraketide synthase pks1 and enzymatically esterified to the core in the last biosynthetic step, by the acetyltransferase M4. The biosynthesis of the tetraketide must involve 3 rounds of chain extension. After the first and second rounds methyl-transfer occurs, and in all rounds of extension the ketoreductase and dehydratase are active. The enoyl reductase and C-MeT of pks1 are not active in the final round of extension. The acetyltransferase M4 appears to have a broad substrate selectivity for its acyl CoA substrate, allowing the in vitro synthesis of novel squalestatins. The biosynthesis of SQS1 requires several oxidative steps likely performed by oxidoreductases M1, R1 and R2. Finally, in support of the identification of the cluster as being responsible for SQS1 production, the cluster contains a gene encoding a putative squalene synthase (SS) R6, suggesting a likely mechanism for self-resistance. In Phoma sp. (strain ATCC 20986 / MF5453), this protein is Acyl-CoA ligase M9.